The chain runs to 109 residues: U-scoloptoxin(16)-Cw1a (109 aa).

A signal peptide spans 1–21; the sequence is MNAVFIVFLSAILSYPHESFA.

Belongs to the scoloptoxin-16 family. In terms of processing, contains 4 disulfide bonds. Expressed by the venom gland.

Its subcellular location is the secreted. The chain is U-scoloptoxin(16)-Cw1a from Cormocephalus westwoodi (Westwood's green centipede).